We begin with the raw amino-acid sequence, 61 residues long: Small ribosomal subunit protein uS14B (61 aa).

4 residues coordinate Zn(2+): cysteine 24, cysteine 27, cysteine 40, and cysteine 43.

This sequence belongs to the universal ribosomal protein uS14 family. Zinc-binding uS14 subfamily. Part of the 30S ribosomal subunit. Contacts proteins S3 and S10. Requires Zn(2+) as cofactor.

Its function is as follows. Binds 16S rRNA, required for the assembly of 30S particles and may also be responsible for determining the conformation of the 16S rRNA at the A site. This chain is Small ribosomal subunit protein uS14B, found in Mycolicibacterium smegmatis (strain ATCC 700084 / mc(2)155) (Mycobacterium smegmatis).